A 168-amino-acid polypeptide reads, in one-letter code: Quinol oxidase subunit 2 (168 aa).

A helical transmembrane segment spans residues 9–31; that stretch reads EVWFIVMLVLVLIFFSWNVYYLS.

It belongs to the cytochrome c oxidase subunit 2 family.

The protein localises to the cell membrane. The enzyme catalyses 2 a quinol + O2 = 2 a quinone + 2 H2O. Its function is as follows. The terminal oxidase is the component of the respiratory chain that catalyzes the reduction of oxygen to water. Subunits 1-3 form the functional core of the enzyme complex. Subunit 2 transfers the electrons from caldariella quinol to the bimetallic center of the catalytic subunit 1 that is formed by heme A3 and Cu(B). The polypeptide is Quinol oxidase subunit 2 (soxA) (Sulfolobus acidocaldarius (strain ATCC 33909 / DSM 639 / JCM 8929 / NBRC 15157 / NCIMB 11770)).